Here is a 144-residue protein sequence, read N- to C-terminus: Large ribosomal subunit protein uL15 (144 aa).

Positions 24 to 52 (GSGLGKTAGRGHKGLKSRSGGSVRPGFEG) are disordered.

It belongs to the universal ribosomal protein uL15 family. Part of the 50S ribosomal subunit.

Binds to the 23S rRNA. The sequence is that of Large ribosomal subunit protein uL15 from Cellvibrio japonicus (strain Ueda107) (Pseudomonas fluorescens subsp. cellulosa).